A 256-amino-acid polypeptide reads, in one-letter code: Thiazole synthase (256 aa).

The active-site Schiff-base intermediate with DXP is K95. 1-deoxy-D-xylulose 5-phosphate contacts are provided by residues G156, 182 to 183 (AG), and 204 to 205 (NT).

Belongs to the ThiG family. As to quaternary structure, homotetramer. Forms heterodimers with either ThiH or ThiS.

The protein localises to the cytoplasm. It carries out the reaction [ThiS sulfur-carrier protein]-C-terminal-Gly-aminoethanethioate + 2-iminoacetate + 1-deoxy-D-xylulose 5-phosphate = [ThiS sulfur-carrier protein]-C-terminal Gly-Gly + 2-[(2R,5Z)-2-carboxy-4-methylthiazol-5(2H)-ylidene]ethyl phosphate + 2 H2O + H(+). The protein operates within cofactor biosynthesis; thiamine diphosphate biosynthesis. Functionally, catalyzes the rearrangement of 1-deoxy-D-xylulose 5-phosphate (DXP) to produce the thiazole phosphate moiety of thiamine. Sulfur is provided by the thiocarboxylate moiety of the carrier protein ThiS. In vitro, sulfur can be provided by H(2)S. In Escherichia coli (strain K12 / MC4100 / BW2952), this protein is Thiazole synthase.